A 260-amino-acid chain; its full sequence is Type II methyltransferase M.CviBI (260 aa).

S-adenosyl-L-methionine-binding residues include Trp-7, Lys-11, Asp-54, and Asp-177.

It belongs to the N(4)/N(6)-methyltransferase family.

It carries out the reaction a 2'-deoxyadenosine in DNA + S-adenosyl-L-methionine = an N(6)-methyl-2'-deoxyadenosine in DNA + S-adenosyl-L-homocysteine + H(+). In terms of biological role, a alpha subtype methylase, recognizes the double-stranded sequence 5'-GANTC-3', methylates A-2 on both strands, and protects the DNA from cleavage by the CviBI endonuclease. The polypeptide is Type II methyltransferase M.CviBI (Paramecium bursaria Chlorella virus NC1A (PBCV-NC1A)).